Consider the following 74-residue polypeptide: Control protein C.MunI (74 aa).

The 56-residue stretch at 12–67 folds into the HTH cro/C1-type domain; it reads LKKLRKEKTDLSQESFAAQIDLDRTYYSSIENGKRNVSLVNLEKISAGLGITLSEL. The H-T-H motif DNA-binding region spans 23 to 42; it reads SQESFAAQIDLDRTYYSSIE.

Probably controls expression of its associated restriction-modification system MunI. The chain is Control protein C.MunI from Mycoplasma sp.